The sequence spans 509 residues: Putative ATP-dependent RNA helicase QP509L (509 aa).

The 153-residue stretch at 110–262 (KKLLSPYGRF…KIIIHHLGQP (153 aa)) folds into the Helicase ATP-binding domain. Residue 123-130 (LNTGLGKT) coordinates ATP. Positions 215 to 218 (DEAH) match the DEAH box motif.

This sequence belongs to the DEAD box helicase family. DEAH subfamily.

The enzyme catalyses ATP + H2O = ADP + phosphate + H(+). The protein is Putative ATP-dependent RNA helicase QP509L of African swine fever virus (strain Badajoz 1971 Vero-adapted) (Ba71V).